The following is a 254-amino-acid chain: Methyl-CpG-binding domain-containing protein 11 (254 aa).

Residues E4–T74 form the MBD domain. The disordered stretch occupies residues K56–G254. 4 stretches are compositionally biased toward basic and acidic residues: residues R80–K97, S107–E130, E151–I162, and E178–G254. S116 carries the post-translational modification Phosphoserine.

Expressed in leaves (around hydathodes), buds, flowers (carpels and pollen grains), stems (around nodes), siliques, mature seeds and roots.

It localises to the nucleus. Transcriptional regulator that binds DNA independently of its methylation status. Required during plant organogenesis and development. The chain is Methyl-CpG-binding domain-containing protein 11 (MBD11) from Arabidopsis thaliana (Mouse-ear cress).